The chain runs to 168 residues: Mediator of RNA polymerase II transcription subunit 7a (168 aa).

2 coiled-coil regions span residues 64-92 (KDSNLDYKNELRSLNRELQLHILELADVL) and 132-166 (IMELQIQQRKQAVEDIKRRREEAQRLLKDAYLTLD).

The protein belongs to the Mediator complex subunit 7 family. In terms of assembly, component of the Mediator complex. Interacts with MEE14/CBP1.

The protein localises to the nucleus. Its function is as follows. Component of the Mediator complex, a coactivator involved in the regulated transcription of nearly all RNA polymerase II-dependent genes. Mediator functions as a bridge to convey information from gene-specific regulatory proteins to the basal RNA polymerase II transcription machinery. The Mediator complex, having a compact conformation in its free form, is recruited to promoters by direct interactions with regulatory proteins and serves for the assembly of a functional pre-initiation complex with RNA polymerase II and the general transcription factors. The chain is Mediator of RNA polymerase II transcription subunit 7a (MED7A) from Arabidopsis thaliana (Mouse-ear cress).